The chain runs to 136 residues: Large ribosomal subunit protein uL16c (136 aa).

Belongs to the universal ribosomal protein uL16 family. As to quaternary structure, part of the 50S ribosomal subunit.

It localises to the plastid. The protein localises to the chloroplast. The protein is Large ribosomal subunit protein uL16c of Oryza sativa (Rice).